The sequence spans 512 residues: NAD-dependent deacetylase sir2A (512 aa).

Residues 7–110 (IECIHLKDEY…EILENIKSSN (104 aa)) form a UBP-type zinc finger. Zn(2+)-binding residues include Cys-9, His-11, Cys-34, Cys-37, Cys-46, Cys-49, Cys-54, His-61, His-65, His-71, Cys-84, and Cys-87. The span at 113-122 (DKIVPKKDQK) shows a compositional bias: basic and acidic residues. Residues 113–196 (DKIVPKKDQK…DESSSEGEES (84 aa)) are disordered. Low complexity predominate over residues 130–175 (VVPSASITTSSTTTSISKQTTVNNTTTTSSSSTTTTTTTTSTTINN). The span at 176-195 (NEEEEESESETDESSSEGEE) shows a compositional bias: acidic residues. Residues 231–503 (CVLKKPTIEE…LDLIKLLGWE (273 aa)) form the Deacetylase sirtuin-type domain. His-361 serves as the catalytic Proton acceptor. Positions 369, 372, 393, and 399 each coordinate Zn(2+).

The protein belongs to the sirtuin family. Requires Zn(2+) as cofactor.

The catalysed reaction is N(6)-acetyl-L-lysyl-[protein] + NAD(+) + H2O = 2''-O-acetyl-ADP-D-ribose + nicotinamide + L-lysyl-[protein]. Its function is as follows. NAD-dependent deacetylase, which plays an important role in the regulation of transcriptional repression. This is NAD-dependent deacetylase sir2A (sir2A) from Dictyostelium discoideum (Social amoeba).